The chain runs to 480 residues: Glutamyl-tRNA(Gln) amidotransferase subunit A (480 aa).

Residues K79 and S154 each act as charge relay system in the active site. The interval 133–156 (NENSAYGPVRNPRDKSRVPGGSSG) is disordered. S178 serves as the catalytic Acyl-ester intermediate.

This sequence belongs to the amidase family. GatA subfamily. In terms of assembly, heterotrimer of A, B and C subunits.

It carries out the reaction L-glutamyl-tRNA(Gln) + L-glutamine + ATP + H2O = L-glutaminyl-tRNA(Gln) + L-glutamate + ADP + phosphate + H(+). Allows the formation of correctly charged Gln-tRNA(Gln) through the transamidation of misacylated Glu-tRNA(Gln) in organisms which lack glutaminyl-tRNA synthetase. The reaction takes place in the presence of glutamine and ATP through an activated gamma-phospho-Glu-tRNA(Gln). This is Glutamyl-tRNA(Gln) amidotransferase subunit A from Koribacter versatilis (strain Ellin345).